We begin with the raw amino-acid sequence, 845 residues long: Complement component C7 (845 aa).

A signal peptide spans 1–22 (MQVTSLLILVCFIAAFQVFSRA). The 54-residue stretch at 27-80 (NCKWDSYGPWSECNGCTKTQTRRRSVAVYGQYGGYPCEGSAFETQSCKPERGCP) folds into the TSP type-1 1 domain. Intrachain disulfides connect Cys-28/Cys-63, Cys-39/Cys-73, Cys-42/Cys-79, Cys-85/Cys-96, Cys-91/Cys-109, and Cys-103/Cys-119. The 37-residue stretch at 84–120 (GCGDRFRCFSGQCISKSLVCNGDPDCEEDGADEDKCE) folds into the LDL-receptor class A domain. The 335-residue stretch at 122 to 456 (VANPSCNIDK…EYFDEFDPCH (335 aa)) folds into the MACPF domain. Asn-124 carries an N-linked (GlcNAc...) asparagine glycan. An intrachain disulfide couples Cys-127 to Cys-164. Residue Asn-201 is glycosylated (N-linked (GlcNAc...) asparagine). Disulfide bonds link Cys-336/Cys-353, Cys-433/Cys-560, Cys-455/Cys-505, Cys-457/Cys-473, Cys-460/Cys-475, Cys-477/Cys-486, Cys-512/Cys-545, Cys-523/Cys-535, Cys-571/Cys-613, Cys-599/Cys-626, Cys-631/Cys-673, Cys-659/Cys-688, Cys-703/Cys-714, Cys-716/Cys-751, Cys-722/Cys-744, Cys-729/Cys-764, Cys-774/Cys-783, Cys-777/Cys-790, Cys-792/Cys-826, Cys-798/Cys-819, and Cys-806/Cys-839. The region spanning 457 to 487 (CRPCQNGGLAIVVETQCQCLCKPYTFGSACE) is the EGF-like domain. The TSP type-1 2 domain maps to 500-549 (DGGWNCWSSWSPCVQGKRTRSRECNNPPPRDDGKSCLGETTESKQCEDQD). CCP stretches follow at residues 545–615 (CEDQ…RCGE) and 616–693 (DLQW…QKAT). 2 Sushi domains span residues 569 to 628 (EFCL…HCQK) and 629 to 690 (LACV…KCVQ). Factor I module (FIM) stretches follow at residues 695–771 (TPPP…SPAE) and 772–844 (KVCG…EEAA). Residue Asn-755 is glycosylated (N-linked (GlcNAc...) asparagine).

Belongs to the complement C6/C7/C8/C9 family. Monomer or dimer; as a C5b-7 complex it can also form multimeric rosettes. Component of the membrane attack complex (MAC), composed of complement C5b, C6, C7, C8A, C8B, C8G and multiple copies of the pore-forming subunit C9. Post-translationally, C-, N- and O-glycosylated. O-glycosylated with core 1 or possibly core 8 glycans.

Its subcellular location is the secreted. It localises to the target cell membrane. Membrane attack complex (MAC) assembly is inhibited by CD59, thereby protecting self-cells from damage during complement activation. MAC assembly is also inhibited by clusterin (CLU) chaperones that inhibit polymerization of C9. Component of the membrane attack complex (MAC), a multiprotein complex activated by the complement cascade, which inserts into a target cell membrane and forms a pore, leading to target cell membrane rupture and cell lysis. The MAC is initiated by proteolytic cleavage of C5 into complement C5b in response to the classical, alternative, lectin and GZMK complement pathways. The complement pathways consist in a cascade of proteins that leads to phagocytosis and breakdown of pathogens and signaling that strengthens the adaptive immune system. C7 serves as a membrane anchor. During MAC assembly, associates with C5b and C6 to form the C5b-7 complex, a key lipophilic precursor of the MAC complex, which associates with the outer leaflet and reduces the energy for membrane bending. The sequence is that of Complement component C7 from Mus musculus (Mouse).